The chain runs to 233 residues: MKLFDYAPLSLAWREFLQSEFKKPYFLEIEKRYLEALKSPKTIFPKSSHLFYALNLTPPCAVKIILLGQDPYHSIYLENSQELPVAMGLSFGVNPNAPIPPSLRNIFKELHANLGVPIPCCGDLSAWAKRGMLLLNAILSVEKKQAASHQYIGWENFSDRILARLFETTSPLIVVLLGKVAQKKIALIPKNKHIIITAPHPSPLARGFLGSGVFTSIQKAYREIYRKDFDFSL.

The active-site Proton acceptor is the D70.

This sequence belongs to the uracil-DNA glycosylase (UDG) superfamily. UNG family.

It localises to the cytoplasm. It catalyses the reaction Hydrolyzes single-stranded DNA or mismatched double-stranded DNA and polynucleotides, releasing free uracil.. Excises uracil residues from the DNA which can arise as a result of misincorporation of dUMP residues by DNA polymerase or due to deamination of cytosine. The protein is Uracil-DNA glycosylase of Helicobacter acinonychis (strain Sheeba).